The primary structure comprises 429 residues: Probable beta-1,3-galactosyl-O-glycosyl-glycoprotein beta-1,6-N-acetylglucosaminyltransferase 7 (429 aa).

Residues 1-8 lie on the Cytoplasmic side of the membrane; it reads MSQLRATK. Residues 9–25 traverse the membrane as a helical; Signal-anchor for type II membrane protein segment; sequence PGILVCAAIGIFVFLYL. Residues 26-429 lie on the Extracellular side of the membrane; that stretch reads RNPTSEDPEE…ESHLNRRLNP (404 aa). Cystine bridges form between cysteine 53-cysteine 205, cysteine 139-cysteine 354, cysteine 160-cysteine 187, and cysteine 363-cysteine 394. The N-linked (GlcNAc...) asparagine glycan is linked to asparagine 87. N-linked (GlcNAc...) asparagine glycosylation occurs at asparagine 272.

This sequence belongs to the glycosyltransferase 14 family.

It is found in the golgi apparatus membrane. It functions in the pathway protein modification; protein glycosylation. Functionally, probable glycosyltransferase. The protein is Probable beta-1,3-galactosyl-O-glycosyl-glycoprotein beta-1,6-N-acetylglucosaminyltransferase 7 of Sus scrofa (Pig).